The following is a 247-amino-acid chain: MLELGKLLTALIAPPLNTFVLLIIAAIIYCVHFKKLAKFIAIISFTWLYIMSAPFTGLLLTNNDDSPALTLDEYKQAQAIVILGGGSYQTKELYAETASGAPQLERLRYAAFLQKETGLPILTTGYSLIGISEGDLMAKELNQFFNVPTQWIENKARNTEENASFTKNILIKDHIQKIILVTNQWHMKRAKYLFEKQGFDVLPAAAASYGSKGNLSAKSFIPDLGALNSNMVLLKEWIGYWKAHYVE.

The next 2 membrane-spanning stretches (helical) occupy residues 11–31 and 39–59; these read LIAP…IYCV and FIAI…TGLL.

The protein resides in the cell membrane. This is an uncharacterized protein from Haemophilus influenzae (strain ATCC 51907 / DSM 11121 / KW20 / Rd).